The sequence spans 387 residues: Small ribosomal subunit protein mS31 (387 aa).

The transit peptide at 1 to 56 (MLHRIPAFIRPRPFSGLPLSCGNREVSVAASVLPAAGSGAVRTENTIQRHFCTSRS) directs the protein to the mitochondrion. Disordered regions lie at residues 59 to 83 (SKKD…GEGK) and 203 to 228 (KSPS…SSLS). Polar residues-rich tracts occupy residues 66-76 (VPANETSQKAA) and 207-217 (MRVSSRPQHQI).

It belongs to the mitochondrion-specific ribosomal protein mS31 family. Component of the mitochondrial ribosome small subunit (28S) which comprises a 12S rRNA and about 30 distinct proteins.

It localises to the mitochondrion. This Rattus norvegicus (Rat) protein is Small ribosomal subunit protein mS31 (Mrps31).